The following is a 698-amino-acid chain: Topoisomerase subunit TopoN (698 aa).

K429 participates in a covalent cross-link: Isoglutamyl lysine isopeptide (Lys-Gln) (interchain with Q-Cter in protein Pup). The disordered stretch occupies residues 443–473 (GAKARARAASKAKGLGTNLSLPPKLLPSRES). The Toprim domain maps to 479–593 (AELFLCEGDS…AGMVYVTMPP (115 aa)).

It belongs to the type II topoisomerase family. As to quaternary structure, a complex of TopoN and TopoM, possibly a heterotetramer. The cofactor is Mg(2+).

It carries out the reaction ATP-dependent breakage, passage and rejoining of double-stranded DNA.. With respect to regulation, inhibited by quinolone antibiotic ciprofloxacin and coumarin antibiotic novobiocin, but at much higher concentrations than is usual for DNA gyrase/topoisomerase. Its function is as follows. Catalyzes the relaxation of negatively supercoiled DNA in the presence of ATP or dATP but not other nucleotides. Individual subunits have no activity. Not able to negatively supercoil DNA, it can however introduce positive supercoils in DNA. Relaxes positive supercoils in an ATP-dependent manner. Catenates and decatenates DNA. Generates dsDNA breaks in the presence of the quinolone antibiotic ciprofloxacin, showing it is a topoisomerase. This chain is Topoisomerase subunit TopoN, found in Mycolicibacterium smegmatis (strain ATCC 700084 / mc(2)155) (Mycobacterium smegmatis).